Consider the following 126-residue polypeptide: MSGMGFLAVGVGAALGAWLRWALAILLNAVNPALPYGTLAANLVGGYLIGVAVGFFDTHAGLPPEWRLLVITGFLGGLTTFSTFSGEVVANILAGDHVIGVLHIVAHLGGSLFLTMLGFWTVRTFS.

4 consecutive transmembrane segments (helical) span residues 6–26, 36–56, 69–89, and 99–119; these read FLAVGVGAALGAWLRWALAIL, YGTLAANLVGGYLIGVAVGFF, LVITGFLGGLTTFSTFSGEVV, and IGVLHIVAHLGGSLFLTMLGF. Gly76 and Thr79 together coordinate Na(+).

It belongs to the fluoride channel Fluc/FEX (TC 1.A.43) family.

The protein localises to the cell inner membrane. It carries out the reaction fluoride(in) = fluoride(out). Its activity is regulated as follows. Na(+) is not transported, but it plays an essential structural role and its presence is essential for fluoride channel function. Fluoride-specific ion channel. Important for reducing fluoride concentration in the cell, thus reducing its toxicity. In Ralstonia pickettii (strain 12J), this protein is Fluoride-specific ion channel FluC.